Consider the following 892-residue polypeptide: Putative VWFA domain-containing protein ORF892 (892 aa).

A disordered region spans residues 109–548 (EEQLQRRPQR…RGYAHGDEDL (440 aa)). Polar residues predominate over residues 129–142 (SEVANQRVSRSAEN). The segment covering 143-162 (QGKRGNEEKQQQKTPGKTEE) has biased composition (basic and acidic residues). Positions 169 to 184 (ESGEEGNQQEESGEEQ) are enriched in acidic residues. Positions 185 to 196 (EGVKGSRSKQRE) are enriched in basic and acidic residues. Residues 212-223 (ESGESESEEGQS) are compositionally biased toward acidic residues. Low complexity-rich tracts occupy residues 224 to 238 (SEETQLSSSGEGNQQ) and 271 to 283 (GNGQESSGEAQNG). Residues 287–300 (GESEGEITESESAS) are compositionally biased toward acidic residues. Over residues 301 to 323 (EEQTGSKGKSGQQGEEGQQQSGS) the composition is skewed to low complexity. Acidic residues-rich tracts occupy residues 324–336 (EGEEGAEQEESGE) and 425–448 (SESEEGQSPEETQEGGEGGAETEE). Residues 453–466 (SEAEGTAAEGEVGQ) are compositionally biased toward low complexity. Polar residues-rich tracts occupy residues 467–481 (PSEQGVSSSTGSGQR) and 512–531 (QTGSSSESAGSEQLGSQQGE). Basic and acidic residues predominate over residues 536-546 (EGGRGYAHGDE). Residues 553-620 (QEINSILQTL…VQKLLKDLNV (68 aa)) adopt a coiled-coil conformation. One can recognise a VWFA domain in the interval 723–892 (DFLFVIDSSG…GNIVLKRLVH (170 aa)).

The chain is Putative VWFA domain-containing protein ORF892 from Acidianus two-tailed virus (ATV).